The chain runs to 347 residues: Inositol 2-dehydrogenase (347 aa).

Belongs to the Gfo/Idh/MocA family. Homotetramer.

It carries out the reaction myo-inositol + NAD(+) = scyllo-inosose + NADH + H(+). In terms of biological role, involved in the oxidation of myo-inositol (MI) to 2-keto-myo-inositol (2KMI or 2-inosose). This Rubrobacter xylanophilus (strain DSM 9941 / JCM 11954 / NBRC 16129 / PRD-1) protein is Inositol 2-dehydrogenase.